The chain runs to 296 residues: tRNA dimethylallyltransferase (296 aa).

2 to 9 lines the ATP pocket; the sequence is GPTASGKT. 4–9 contacts substrate; that stretch reads TASGKT. Interaction with substrate tRNA regions lie at residues 27–30, 151–155, and 232–237; these read DSAL, QRLSR, and RCVGYR.

This sequence belongs to the IPP transferase family. As to quaternary structure, monomer. Requires Mg(2+) as cofactor.

It catalyses the reaction adenosine(37) in tRNA + dimethylallyl diphosphate = N(6)-dimethylallyladenosine(37) in tRNA + diphosphate. Catalyzes the transfer of a dimethylallyl group onto the adenine at position 37 in tRNAs that read codons beginning with uridine, leading to the formation of N6-(dimethylallyl)adenosine (i(6)A). The chain is tRNA dimethylallyltransferase from Shewanella frigidimarina (strain NCIMB 400).